The primary structure comprises 400 residues: MDIATGPESLDRCFTRGPSDCAKMLDTIKMEDHPLRTGTATLGVLLGSECQHQAVCEGCQRPISDRFLMRVNEASWHEECLQCTVCQQPLTTSCYFRDRKLFCKQDYQQLFAAKCSGCMEKIAPTEFVMRALECVYHLSCFCCCVCERQLRKGDEFVLKEGQLLCKSDYEKEKDLLSSGSPDDSDSVKSDDEEGDVKPGKGRVNQGKGSDDGKDPRRPKRPRTILTTQQRRAFKASFEVSSKPCRKVRETLAAETGLSVRVVQVWFQNQRAKIKKLARRHQQQQEQQNSQRLGQEVMSSRMEGMMTSYAPLAPSQQQIVTMDQNSYSTDPFQQGLTPPQMPGDHMNPYGNDTIFHDIDSDTSLTSLSDCFLASSEVTSMQARVGNPIDRLYSMQSSYFAS.

LIM zinc-binding domains are found at residues 54 to 113 and 114 to 175; these read AVCE…LFAA and KCSG…EKDL. The tract at residues 175-228 is disordered; sequence LLSSGSPDDSDSVKSDDEEGDVKPGKGRVNQGKGSDDGKDPRRPKRPRTILTTQ. Positions 218–277 form a DNA-binding region, homeobox; it reads PKRPRTILTTQQRRAFKASFEVSSKPCRKVRETLAAETGLSVRVVQVWFQNQRAKIKKLA.

In terms of tissue distribution, shows a temporal expression pattern in three main areas: neural, kidney and limbs. From stage 13 onwards, expressed in regions of the nervous system including the placodes and otic vesicles, eye, specific sets of neurons, and in discreet regions of the neural tube. From stage 13, also expressed in the presumptive pronephros, and from stage 27 expression is predominant in the capsule of the pronephric glomus. Also expressed in the developing forelimbs and hindlimbs. In metamorphosing tadpoles, expressed in the eye, brain, muscle and mesonephric kidney.

It localises to the nucleus. Its function is as follows. Required for early specification of the kidney glomus, lying upstream of wt1 in the pathway controlling glomus differentiation. The balance in levels and expression patterns of binding partners such as lhx1/lim-1 influences differentiation into glomus or tubule derivatives. Involved in specification of serotonergic neurons. The polypeptide is LIM homeobox transcription factor 1-beta.1 (Xenopus laevis (African clawed frog)).